Reading from the N-terminus, the 268-residue chain is Homeobox protein Hox-C4a (268 aa).

Residues 70–129 are disordered; the sequence is PEPDTQRGHGLPHAGHLLGKGQSASCEPPPLPLSPATPSAASSACNQATPEHPNSSASAK. 2 stretches are compositionally biased toward low complexity: residues 77–95 and 105–114; these read GHGL…SASC and ATPSAASSAC. Positions 115–128 are enriched in polar residues; that stretch reads NQATPEHPNSSASA. An Antp-type hexapeptide motif is present at residues 133-138; it reads VYPWMK. Residues 154 to 213 constitute a DNA-binding region (homeobox); the sequence is PKRSRTAYTRQQVLELEKEFHYNRYLTRRRRIEIAHSLVLSERQIKIWFQNRRMKWKKDH. The tract at residues 212 to 268 is disordered; the sequence is DHRLPNTKVRSSSSTGISSGSNTSSAAGVVAAASTTNTMSASEDLSGTERGEDITRL. The span at 222-253 shows a compositional bias: low complexity; the sequence is SSSSTGISSGSNTSSAAGVVAAASTTNTMSAS. Residues 258–268 show a composition bias toward basic and acidic residues; that stretch reads GTERGEDITRL.

This sequence belongs to the Antp homeobox family. Deformed subfamily.

The protein resides in the nucleus. Sequence-specific transcription factor which is part of a developmental regulatory system that provides cells with specific positional identities on the anterior-posterior axis. In Danio rerio (Zebrafish), this protein is Homeobox protein Hox-C4a (hoxc4a).